The primary structure comprises 579 residues: Laccase (579 aa).

The tat-type signal signal peptide spans 1–31; sequence MTDWSRRRFLQTGAALGIAGTLPQTTTEVSA. The region spanning 82 to 214 is the Plastocyanin-like 1 domain; it reads WGFDGSYPGP…AGLLGLYSIT (133 aa). Residues H145, H147, H192, and H194 each coordinate Cu cation. The disordered stretch occupies residues 372-401; sequence VSDPSTPPEDASADPTSLSLPTPASYDESD. A Plastocyanin-like 2 domain is found at 423–530; that stretch reads LNGHVFGDED…NKMMIPFVVE (108 aa). An N-linked (GlcNAc...) asparagine glycan is attached at N449. The Cu cation site is built by H455, H458, H460, H512, C513, H514, H518, and M523. The N-linked (GlcNAc...) asparagine glycan is linked to N557.

Belongs to the multicopper oxidase family. The cofactor is Cu(2+). Post-translationally, exported by the Tat system. Glycosylated.

The protein localises to the secreted. The catalysed reaction is 4 hydroquinone + O2 = 4 benzosemiquinone + 2 H2O. Its activity is regulated as follows. Inhibited by 1 mM NaN(3), 10 mM thiourea, 10 mM 1,10-phenanthroline, 0.1 mM DL-dithiothreitol (DTT) and 1 mM L-cysteine. The inhibition by DTT and L-cysteine is likely caused by reduction of the oxidized substrate and not by inhibition of the enzyme. Catalyzes the oxidation of a wide variety of organic substrates, including bilirubin, syringaldazine (SGZ), 2,2'-azino-di-(3-ethylbenzothiazoline)-6-sulfonic acid (ABTS) and dimethoxyphenol (DMP). No oxidation of Fe(2+) or guaiacol. This chain is Laccase (lccA), found in Haloferax volcanii (strain ATCC 29605 / DSM 3757 / JCM 8879 / NBRC 14742 / NCIMB 2012 / VKM B-1768 / DS2) (Halobacterium volcanii).